A 187-amino-acid polypeptide reads, in one-letter code: 3'-5' DNA exonuclease Cap18 (187 aa).

The Exonuclease domain occupies 9–173 (VSVDVETSGP…HDARYQAELF (165 aa)). Residues D12, M25, H160, and D165 each contribute to the Mg(2+) site. Catalysis depends on H160, which acts as the Proton donor/acceptor.

The protein belongs to the Cap18 exonuclease family. As to quaternary structure, homodimer.

In terms of biological role, effector component of a CBASS antivirus system. CBASS (cyclic oligonucleotide-based antiphage signaling system) provides immunity against bacteriophage. The CD-NTase protein synthesizes cyclic nucleotides in response to infection; these serve as specific second messenger signals. The signals activate a diverse range of effectors, leading to bacterial cell death and thus abortive phage infection. A type III CBASS system. A sequence non-specific 3'-5' DNA exonuclease that preferentially degrades ssDNA with 3' overhangs or a mismatch at the 3' end. Expression of this CBASS system (Cap17-CapW-CdnC-Cap7-Cap6-Cap18-Cap19) in a susceptible E.coli (strain JP313) confers resistance to bacteriophage lambda cI--. This Escherichia coli protein is 3'-5' DNA exonuclease Cap18.